Reading from the N-terminus, the 59-residue chain is UPF0434 protein GOX0764 (59 aa).

The protein belongs to the UPF0434 family.

This chain is UPF0434 protein GOX0764, found in Gluconobacter oxydans (strain 621H) (Gluconobacter suboxydans).